The following is a 351-amino-acid chain: Glycerol-3-phosphate dehydrogenase 1-like protein (351 aa).

11-16 contacts NAD(+); it reads GSGNWG. Residue Lys-121 participates in substrate binding. Ala-154 lines the NAD(+) pocket. Lys-205 acts as the Proton acceptor in catalysis. NAD(+)-binding residues include Arg-271, Lys-298, and Gln-300. 271–272 contacts substrate; it reads RN.

It belongs to the NAD-dependent glycerol-3-phosphate dehydrogenase family.

Its subcellular location is the cytoplasm. The enzyme catalyses sn-glycerol 3-phosphate + NAD(+) = dihydroxyacetone phosphate + NADH + H(+). Its function is as follows. Plays a role in regulating cardiac sodium current. This chain is Glycerol-3-phosphate dehydrogenase 1-like protein (gpd1l), found in Danio rerio (Zebrafish).